Reading from the N-terminus, the 793-residue chain is DnaJ homolog subfamily C member 10 (793 aa).

Residues 1 to 32 (MGVWLNKDDFIRDLKRISLCLLILYVVVVVGT) form the signal peptide. Residues 35–100 (NFYSLLGVSK…DLRKKYDKYG (66 aa)) enclose the J domain. One can recognise a Thioredoxin 1 domain in the interval 130 to 232 (EIITLERREF…ESLVAFAMQH (103 aa)). A disulfide bridge connects residues C158 and C161. Trxb stretches follow at residues 235–350 (STVT…LPDF) and 348–463 (PDFE…PQNF). Thioredoxin domains lie at 454–553 (HVTT…IEDL), 557–665 (SVVS…SWGL), and 671–776 (ASID…ALIY). An intrachain disulfide couples C480 to C483. A glycan (N-linked (GlcNAc...) asparagine) is linked at N530. 2 disulfide bridges follow: C588–C591 and C700–C703. Positions 790–793 (KDEL) match the Prevents secretion from ER motif.

As to quaternary structure, interacts with HSPA5 (via its J domain). Interacts with EDEM1. In terms of tissue distribution, ubiquitous. Particularly abundant in secretory tissues. Ubiquitous in fetal tissues and tumor tissues. Higher expression in fetal tissues than in adult tissues. Expressed in testis, pancreas, fetal thymus and fetal kidney. High expression in heart, liver, kidney, and testis. Low expression in spleen and skeletal muscle.

The protein resides in the endoplasmic reticulum lumen. Endoplasmic reticulum disulfide reductase involved both in the correct folding of proteins and degradation of misfolded proteins. Required for efficient folding of proteins in the endoplasmic reticulum by catalyzing the removal of non-native disulfide bonds formed during the folding of proteins, such as LDLR. Also involved in endoplasmic reticulum-associated degradation (ERAD) by reducing incorrect disulfide bonds in misfolded glycoproteins recognized by EDEM1. Interaction with HSPA5 is required its activity, not for the disulfide reductase activity, but to facilitate the release of DNAJC10 from its substrate. Promotes apoptotic signaling pathway in response to endoplasmic reticulum stress. This chain is DnaJ homolog subfamily C member 10 (Dnajc10), found in Mus musculus (Mouse).